We begin with the raw amino-acid sequence, 404 residues long: D-galactonate dehydratase family member Ent638_1932 (404 aa).

Residues asparagine 37 and histidine 122 each contribute to the substrate site. Tyrosine 159 acts as the Proton donor/acceptor in catalysis. Aspartate 212 provides a ligand contact to Mg(2+). Histidine 214 acts as the Proton donor/acceptor in catalysis. The Mg(2+) site is built by glutamate 238 and glutamate 264. 5 residues coordinate substrate: glutamate 264, arginine 285, histidine 314, aspartate 318, and glutamate 341.

Belongs to the mandelate racemase/muconate lactonizing enzyme family. GalD subfamily. Requires Mg(2+) as cofactor.

The enzyme catalyses D-mannonate = 2-dehydro-3-deoxy-D-gluconate + H2O. Has low D-mannonate dehydratase activity (in vitro), suggesting that this is not a physiological substrate and that it has no significant role in D-mannonate degradation in vivo. Has no detectable activity with a panel of 70 other acid sugars (in vitro). This is D-galactonate dehydratase family member Ent638_1932 from Enterobacter sp. (strain 638).